We begin with the raw amino-acid sequence, 144 residues long: Protein E6 (144 aa).

2 zinc fingers span residues cysteine 32–cysteine 68 and cysteine 105–cysteine 141.

It belongs to the papillomaviridae E6 protein family. Forms homodimers. Interacts with ubiquitin-protein ligase UBE3A/E6-AP; this interaction stimulates UBE3A ubiquitin activity. Interacts with host TP53 and EP300; this interaction inhibits TP53 activity.

The protein resides in the host cytoplasm. Its subcellular location is the host nucleus. Its function is as follows. Plays a major role in the induction and maintenance of cellular transformation. E6 associates with host UBE3A/E6-AP ubiquitin-protein ligase and modulates its activity. Sequesters tumor suppressor TP53 in the host cytoplasm and modulates its activity by interacting with host EP300 that results in the reduction of TP53 acetylation and activation. In turn, apoptosis induced by DNA damage is inhibited. E6 also protects host keratinocytes from apoptosis by mediating the degradation of host BAK1. May also inhibit host immune response. This is Protein E6 from Homo sapiens (Human).